Consider the following 68-residue polypeptide: U4-agatoxin-Ao1a (68 aa).

An N-terminal signal peptide occupies residues 1-25 (MKKSTVIVLSLAAFVLLSVMQFSAA). A propeptide spanning residues 26–36 (EDIKMEVEEQR) is cleaved from the precursor. 4 disulfide bridges follow: C39–C52, C46–C57, C51–C66, and C59–C64.

This sequence belongs to the neurotoxin 33 family. Expressed by the venom gland.

It localises to the secreted. The polypeptide is U4-agatoxin-Ao1a (Agelena orientalis (Funnel-web spider)).